Here is a 76-residue protein sequence, read N- to C-terminus: Acyl carrier protein (76 aa).

The Carrier domain occupies 1-76; that stretch reads MSIEERVKKI…SAIDYVQNNQ (76 aa). S36 bears the O-(pantetheine 4'-phosphoryl)serine mark.

It belongs to the acyl carrier protein (ACP) family. Post-translationally, 4'-phosphopantetheine is transferred from CoA to a specific serine of apo-ACP by AcpS. This modification is essential for activity because fatty acids are bound in thioester linkage to the sulfhydryl of the prosthetic group.

It is found in the cytoplasm. The protein operates within lipid metabolism; fatty acid biosynthesis. Functionally, carrier of the growing fatty acid chain in fatty acid biosynthesis. The sequence is that of Acyl carrier protein from Mannheimia succiniciproducens (strain KCTC 0769BP / MBEL55E).